Consider the following 274-residue polypeptide: Kit ligand (274 aa).

Positions 1–25 (MKKTQTWIITCIYLQLLLFNPLVKT) are cleaved as a signal peptide. The Extracellular portion of the chain corresponds to 26–215 (KGICGKRVTD…SNSIGDSNLQ (190 aa)). 2 cysteine pairs are disulfide-bonded: Cys29-Cys114 and Cys68-Cys164. Asn90, Asn97, Asn145, and Asn196 each carry an N-linked (GlcNAc...) asparagine glycan. The chain crosses the membrane as a helical span at residues 216–238 (WAAMALPAFFSLVIGFAFGALYW). At 239-274 (KKKQPNLTRTVENIQINEEDNEISMLQEKEREFQEV) the chain is on the cytoplasmic side.

It belongs to the SCF family. As to quaternary structure, homodimer, non-covalently linked. Post-translationally, a soluble form is produced by proteolytic processing of the extracellular domain.

It is found in the cytoplasm. It localises to the cytoskeleton. The protein resides in the cell membrane. Its subcellular location is the cell projection. The protein localises to the lamellipodium. It is found in the filopodium. It localises to the secreted. Stimulates the proliferation of mast cells. Able to augment the proliferation of both myeloid and lymphoid hematopoietic progenitors in bone marrow culture. Also mediates cell-cell adhesion. Acts synergistically with other cytokines, probably interleukins. In Canis lupus familiaris (Dog), this protein is Kit ligand (KITLG).